Reading from the N-terminus, the 462-residue chain is Fumarate hydratase class II (462 aa).

Substrate contacts are provided by residues 97-99, 127-130, 137-139, and threonine 185; these read SGT, HPND, and SSN. Histidine 186 (proton donor/acceptor) is an active-site residue. Serine 316 is a catalytic residue. Residues serine 317 and 322 to 324 each bind substrate; that span reads KVN.

It belongs to the class-II fumarase/aspartase family. Fumarase subfamily. As to quaternary structure, homotetramer.

Its subcellular location is the cytoplasm. The catalysed reaction is (S)-malate = fumarate + H2O. The protein operates within carbohydrate metabolism; tricarboxylic acid cycle; (S)-malate from fumarate: step 1/1. In terms of biological role, involved in the TCA cycle. Catalyzes the stereospecific interconversion of fumarate to L-malate. The sequence is that of Fumarate hydratase class II from Bacillus anthracis.